We begin with the raw amino-acid sequence, 186 residues long: Ribosome-recycling factor (186 aa).

It belongs to the RRF family.

Its subcellular location is the cytoplasm. In terms of biological role, responsible for the release of ribosomes from messenger RNA at the termination of protein biosynthesis. May increase the efficiency of translation by recycling ribosomes from one round of translation to another. The chain is Ribosome-recycling factor from Chlorobium chlorochromatii (strain CaD3).